Here is a 1342-residue protein sequence, read N- to C-terminus: DNA-directed RNA polymerase subunit beta (1342 aa).

Residues Lys1022 and Lys1200 each carry the N6-acetyllysine modification.

It belongs to the RNA polymerase beta chain family. As to quaternary structure, the RNAP catalytic core consists of 2 alpha, 1 beta, 1 beta' and 1 omega subunit. When a sigma factor is associated with the core the holoenzyme is formed, which can initiate transcription.

It carries out the reaction RNA(n) + a ribonucleoside 5'-triphosphate = RNA(n+1) + diphosphate. Functionally, DNA-dependent RNA polymerase catalyzes the transcription of DNA into RNA using the four ribonucleoside triphosphates as substrates. This Shigella flexneri serotype 5b (strain 8401) protein is DNA-directed RNA polymerase subunit beta.